We begin with the raw amino-acid sequence, 679 residues long: NADPH--cytochrome P450 reductase (679 aa).

The Lumenal segment spans residues Met-1 to Ser-21. The helical transmembrane segment at Val-22–Phe-42 threads the bilayer. Residues Leu-43–Ser-679 are Cytoplasmic-facing. Ser-64 bears the Phosphoserine mark. In terms of domain architecture, Flavodoxin-like spans Ile-81–Trp-225. Residues Ser-87–Ala-92, Ala-139–Gly-142, Leu-174–Asn-183, and Asp-209 each bind FMN. In terms of domain architecture, FAD-binding FR-type spans Lys-280 to Pro-522. Arg-299 contributes to the NADP(+) binding site. FAD is bound by residues Arg-425, Arg-455–Ser-458, Cys-473–Val-475, Tyr-479, and Gly-489–Thr-492. Residues Thr-536, Ser-597–Arg-598, Lys-603–Gln-607, and Asp-640 contribute to the NADP(+) site. Trp-678 contacts FAD.

It belongs to the NADPH--cytochrome P450 reductase family. The protein in the N-terminal section; belongs to the flavodoxin family. In the C-terminal section; belongs to the flavoprotein pyridine nucleotide cytochrome reductase family. The cofactor is FAD. FMN serves as cofactor.

It is found in the endoplasmic reticulum membrane. The catalysed reaction is 2 oxidized [cytochrome P450] + NADPH = 2 reduced [cytochrome P450] + NADP(+) + H(+). In terms of biological role, this enzyme is required for electron transfer from NADP to cytochrome P450 in microsomes. It can also provide electron transfer to heme oxygenase and cytochrome B5. The protein is NADPH--cytochrome P450 reductase of Oryctolagus cuniculus (Rabbit).